A 494-amino-acid chain; its full sequence is Acetylcholine receptor subunit epsilon (494 aa).

The signal sequence occupies residues 1-20 (MTMALLGTLLLLALFGRSQG). Over 21-239 (KNEELSLYHH…VIYTLIIRRK (219 aa)) the chain is Extracellular. N-linked (GlcNAc...) asparagine glycosylation is found at asparagine 86 and asparagine 161. An intrachain disulfide couples cysteine 148 to cysteine 162. Residues 240–264 (PLFYVINIIVPCVLISGLVLLAYFL) traverse the membrane as a helical segment. Topologically, residues 265–272 (PAQAGGQK) are cytoplasmic. The chain crosses the membrane as a helical span at residues 273–291 (CTVSINVLLAQTVFLFLIA). Residues 292–306 (QKIPETSLSVPLLGR) lie on the Extracellular side of the membrane. Residues 307-328 (YLIFVMVVATLIVMNCVIVLNV) form a helical membrane-spanning segment. Over 329–457 (SLRTPTTHAT…WVRMGKALDN (129 aa)) the chain is Cytoplasmic. A helical transmembrane segment spans residues 458–481 (VCFWAALVLFSVGSTLIFLGGYFN). The Extracellular portion of the chain corresponds to 482 to 494 (QVPDLPYPPCIQP).

It belongs to the ligand-gated ion channel (TC 1.A.9) family. Acetylcholine receptor (TC 1.A.9.1) subfamily. Epsilon/CHRNE sub-subfamily. In terms of assembly, pentamer of two alpha chains, and one each of the beta, delta, and gamma (in immature muscle) or epsilon (in mature muscle) chains. The muscle heteropentamer composed of alpha-1, beta-1, delta, epsilon subunits interacts with the alpha-conotoxin ImII.

The protein localises to the postsynaptic cell membrane. The protein resides in the cell membrane. The catalysed reaction is K(+)(in) = K(+)(out). It catalyses the reaction Na(+)(in) = Na(+)(out). In terms of biological role, after binding acetylcholine, the AChR responds by an extensive change in conformation that affects all subunits and leads to opening of an ion-conducting channel across the plasma membrane. The polypeptide is Acetylcholine receptor subunit epsilon (Chrne) (Rattus norvegicus (Rat)).